A 191-amino-acid chain; its full sequence is UPF0149 protein VCM66_2399 (191 aa).

The protein belongs to the UPF0149 family.

This chain is UPF0149 protein VCM66_2399, found in Vibrio cholerae serotype O1 (strain M66-2).